The sequence spans 614 residues: Glutamine--fructose-6-phosphate aminotransferase [isomerizing] (614 aa).

The Nucleophile; for GATase activity role is filled by C2. The 220-residue stretch at 2-221 folds into the Glutamine amidotransferase type-2 domain; that stretch reads CGIVGYIGKR…DGEIAVINRG (220 aa). 2 SIS domains span residues 291–430 and 463–604; these read YKEK…EKGT and LSKT…VDQP. The active-site For Fru-6P isomerization activity is the K609.

As to quaternary structure, homodimer.

It is found in the cytoplasm. It carries out the reaction D-fructose 6-phosphate + L-glutamine = D-glucosamine 6-phosphate + L-glutamate. In terms of biological role, catalyzes the first step in hexosamine metabolism, converting fructose-6P into glucosamine-6P using glutamine as a nitrogen source. The polypeptide is Glutamine--fructose-6-phosphate aminotransferase [isomerizing] (Bacteroides thetaiotaomicron (strain ATCC 29148 / DSM 2079 / JCM 5827 / CCUG 10774 / NCTC 10582 / VPI-5482 / E50)).